Consider the following 513-residue polypeptide: Na(+)/H(+) antiporter NhaB (513 aa).

Helical transmembrane passes span L23–A43, I52–I72, L97–F117, L120–F140, F144–I164, L202–P222, F238–L258, A303–I323, T348–I368, L391–I411, A447–I467, and V475–F495.

Belongs to the NhaB Na(+)/H(+) (TC 2.A.34) antiporter family.

Its subcellular location is the cell inner membrane. It carries out the reaction 2 Na(+)(in) + 3 H(+)(out) = 2 Na(+)(out) + 3 H(+)(in). Functionally, na(+)/H(+) antiporter that extrudes sodium in exchange for external protons. The polypeptide is Na(+)/H(+) antiporter NhaB (Shigella sonnei (strain Ss046)).